A 441-amino-acid polypeptide reads, in one-letter code: Protein C-ets-1 (441 aa).

N6-acetyllysine; alternate is present on residues K8 and K15. Residues K8 and K15 each participate in a glycyl lysine isopeptide (Lys-Gly) (interchain with G-Cter in SUMO2); alternate cross-link. T38 carries the post-translational modification Phosphothreonine; by MAPK. In terms of domain architecture, PNT spans 51–136 (ATFSGFTKEQ…EHLEILQKED (86 aa)). Residues 130–243 (EILQKEDVKP…DNMCMGRTSR (114 aa)) are activation domain; required for transcription activation. Residue K138 forms a Glycyl lysine isopeptide (Lys-Gly) (interchain with G-Cter in SUMO2) linkage. Y223 carries the post-translational modification Phosphotyrosine. K227 participates in a covalent cross-link: Glycyl lysine isopeptide (Lys-Gly) (interchain with G-Cter in SUMO). A phosphoserine mark is found at S251 and S254. T265 bears the Phosphothreonine mark. Residues S267, S270, S282, and S285 each carry the phosphoserine modification. The tract at residues 304 to 312 (FKDYVRDRA) is helix HI-1. Position 305 is an N6-acetyllysine (K305). A helix HI-2 region spans residues 323–330 (AAALAGYT). The ETS DNA-binding region spans 335–415 (IQLWQFLLEL…AGKRYVYRFV (81 aa)). Residues 418-422 (LQSLL) form a helix H4 region. Residues 426 to 432 (PEELHAM) form a helix H5 region.

Belongs to the ETS family. As to quaternary structure, binds DNA as a homodimer; homodimerization is required for transcription activation. Interacts with MAF and MAFB. Interacts with PAX5; the interaction alters DNA-binding properties. Interacts with DAXX. Interacts with UBE2I. Interacts with SP100; the interaction is direct and modulates ETS1 transcriptional activity. Post-translationally, sumoylated on Lys-15 and Lys-227, preferentially with SUMO2; which inhibits transcriptional activity. In terms of processing, ubiquitinated; which induces proteasomal degradation. Phosphorylation at Ser-251, Ser-282 and Ser-285 by CaMK2/CaMKII in response to calcium signaling decreases affinity for DNA: an increasing number of phosphoserines causes DNA-binding to become progressively weaker. As to expression, highly expressed within lymphoid cells. Isoforms c-ETS-1A and Ets-1 p27 are both detected in all fetal tissues tested, but vary with tissue type in adult tissues. None is detected in brain or kidney.

It is found in the nucleus. The protein resides in the cytoplasm. Its activity is regulated as follows. Autoinhibited by a module composed of four alpha helices (HI-1, HI-2, H4, and H5) that flank the DNA-binding ETS domain, reducing the affinity for DNA. Phosphorylation by CaMK2/CaMKII in response to calcium signaling decreases affinity for DNA. Transcription factor. Directly controls the expression of cytokine and chemokine genes in a wide variety of different cellular contexts. May control the differentiation, survival and proliferation of lymphoid cells. May also regulate angiogenesis through regulation of expression of genes controlling endothelial cell migration and invasion. Functionally, acts as a dominant-negative for isoform c-ETS-1A. In Homo sapiens (Human), this protein is Protein C-ets-1 (ETS1).